A 459-amino-acid chain; its full sequence is Glutamate--isopropylamine ligase (459 aa).

Residues 19-115 (HNIDTIRLGA…VLCDIQHLNG (97 aa)) form the GS beta-grasp domain. Residues 122–459 (PRNLLRKAIE…WELARYLDII (338 aa)) form the GS catalytic domain.

This sequence belongs to the glutamine synthetase family.

The enzyme catalyses isopropylamine + L-glutamate + ATP = gamma-L-glutamyl-isopropylamide + ADP + phosphate + H(+). Functionally, involved in the degradation of isopropylamine, which is a constituent of the herbicides atrazine. Catalyzes the ATP-dependent formation of gamma-glutamyl-isopropylamide from isopropylamine and L-glutamate. It can also use aminoalkanes, amino-alcohols (L-alaninol and D-alaninol) and amino-esters as substrates. The chain is Glutamate--isopropylamine ligase (ipuC) from Pseudomonas sp.